Reading from the N-terminus, the 1019-residue chain is Alpha-mannosidase At3g26720 (1019 aa).

Residues 1 to 22 (MAVKCFSLYLILAAIVIGGVTS) form the signal peptide. Zn(2+)-binding residues include histidine 47 and aspartate 49. The N-linked (GlcNAc...) asparagine glycan is linked to asparagine 64. Zn(2+) is bound at residue aspartate 169. Residues asparagine 278 and asparagine 336 are each glycosylated (N-linked (GlcNAc...) asparagine). Residue histidine 410 coordinates Zn(2+). A disulfide bridge links cysteine 466 with cysteine 474. N-linked (GlcNAc...) asparagine glycosylation is found at asparagine 470, asparagine 638, asparagine 730, and asparagine 820. Cysteine 824 and cysteine 829 are disulfide-bonded.

It belongs to the glycosyl hydrolase 38 family. In terms of assembly, homodimer. The cofactor is Zn(2+).

It catalyses the reaction Hydrolysis of terminal, non-reducing alpha-D-mannose residues in alpha-D-mannosides.. Liberates mannose from p-nitrophenyl-alpha-D-mannoside in vitro. In Arabidopsis thaliana (Mouse-ear cress), this protein is Alpha-mannosidase At3g26720.